Consider the following 92-residue polypeptide: C-C motif chemokine 4 (92 aa).

The first 23 residues, 1–23 (MKLCVSALSLLLLVAAFCAPGFS), serve as a signal peptide directing secretion. 2 disulfides stabilise this stretch: Cys-34–Cys-58 and Cys-35–Cys-74.

Belongs to the intercrine beta (chemokine CC) family. As to quaternary structure, homodimer.

The protein resides in the secreted. In terms of biological role, monokine with inflammatory and chemokinetic properties. The sequence is that of C-C motif chemokine 4 (Ccl4) from Mus musculus (Mouse).